Reading from the N-terminus, the 150-residue chain is Allograft inflammatory factor 1-like (150 aa).

An N-acetylserine modification is found at Ser-2. Position 2 is a phosphoserine (Ser-2). In terms of domain architecture, EF-hand 1 spans 47 to 82 (EKLTAFKEKYMEFDLNNEGEIDLMSLKRMMEKLGVP). Asp-60, Asn-62, Glu-64, and Glu-66 together coordinate Ca(2+). Positions 83–117 (KTHLEMKKMISEVTGGVSDTISYRDFVNMMLGKRS) constitute an EF-hand 2; degenerate domain. A disordered region spans residues 129-150 (KANESSPKPVGPPPERDIASLP). Residue Ser-134 is modified to Phosphoserine.

Homodimer (Potential). Monomer.

It localises to the cytoplasm. The protein localises to the cytoskeleton. The protein resides in the cell projection. Its subcellular location is the ruffle membrane. Functionally, actin-binding protein that promotes actin bundling. May neither bind calcium nor depend on calcium for function. This Homo sapiens (Human) protein is Allograft inflammatory factor 1-like (AIF1L).